The following is a 994-amino-acid chain: UPF0182 protein Strop_3729 (994 aa).

Helical transmembrane passes span 18–38 (IGVL…VQAW), 61–81 (LLLF…NLWL), 110–130 (IGLW…LSAQ), 174–194 (FTAV…FGGI), 209–229 (AHLS…YVLD), 260–280 (ILAY…NAWM), and 283–303 (LVWP…IGGI). 2 disordered regions span residues 891–934 (GEQA…AEAA) and 970–994 (FEQA…SPGG). The span at 897–926 (PSPPPSDDETPPSPTPTPTPTTPSVTPPPL) shows a compositional bias: pro residues.

This sequence belongs to the UPF0182 family.

It is found in the cell membrane. The chain is UPF0182 protein Strop_3729 from Salinispora tropica (strain ATCC BAA-916 / DSM 44818 / JCM 13857 / NBRC 105044 / CNB-440).